We begin with the raw amino-acid sequence, 364 residues long: Flagellar P-ring protein (364 aa).

The N-terminal stretch at 1–29 (MKTIGGKVFRHAAILAACVLPLWCQPALA) is a signal peptide.

It belongs to the FlgI family. As to quaternary structure, the basal body constitutes a major portion of the flagellar organelle and consists of four rings (L,P,S, and M) mounted on a central rod.

It localises to the periplasm. Its subcellular location is the bacterial flagellum basal body. In terms of biological role, assembles around the rod to form the L-ring and probably protects the motor/basal body from shearing forces during rotation. The protein is Flagellar P-ring protein of Dechloromonas aromatica (strain RCB).